The sequence spans 92 residues: Protease inhibitors (92 aa).

The N-terminal stretch at 1-19 is a signal peptide; sequence MKFALALCAAVLLVVLVQA. 2 Pacifastin domains span residues 20–54 and 57–92; these read EEKC…CQPA and EISC…CPNQ. 6 disulfide bridges follow: Cys23–Cys38, Cys33–Cys51, Cys36–Cys46, Cys60–Cys75, Cys70–Cys89, and Cys73–Cys84. O-linked (Fuc) threonine glycosylation is present at Thr65.

The protein belongs to the protease inhibitor I19 family. Brain and fat body.

The protein resides in the secreted. Functionally, both LCMI I and II are inhibitors of chymotrypsin and elastase (in vitro). They both inhibit the prophenol oxidase activation cascade. The chain is Protease inhibitors from Locusta migratoria (Migratory locust).